We begin with the raw amino-acid sequence, 672 residues long: Forkhead box protein O3 (672 aa).

Disordered regions lie at residues 1–85 (MAEA…GVSS) and 110–152 (GPAS…CSSR). A Phosphoserine modification is found at S30. A Phosphothreonine modification is found at T32. K46 is subject to N6-methyllysine. Over residues 57–68 (IPEEDDDEDDED) the composition is skewed to acidic residues. Residues 80-108 (GGGVSSTLGSGLLLEDSAMLLAPGGQDLG) are required for mitochondrial import. A compositionally biased stretch (low complexity) spans 110–129 (GPASAAGALSGGTPTQLQPQ). N6-methyllysine is present on K148. A DNA-binding region (fork-head) is located at residues 156 to 250 (WGNLSYADLI…KSGKAPRRRA (95 aa)). T178 is subject to Phosphothreonine. A phosphoserine mark is found at S208 and S214. K229 is subject to N6-methyllysine. The interval 230–301 (SSWWIINPDG…GSPTSRSSDE (72 aa)) is disordered. The residue at position 241 (K241) is an N6-acetyllysine. A Nuclear localization signal motif is present at residues 241–258 (KSGKAPRRRAVSMDNSNK). S252 bears the Phosphoserine mark. Residues 260 to 271 (TKSRGRAAKKKA) show a composition bias toward basic residues. N6-methyllysine occurs at positions 261 and 270. Phosphoserine occurs at positions 279 and 283. Polar residues predominate over residues 282–297 (DSPSQLSKWPGSPTSR). N6-methyllysine is present on K289. Residue S293 is modified to Phosphoserine. S298 is modified (phosphoserine; by CaMK2A). The mediates interaction with CHUK/IKKA and IKBKB/IKKB stretch occupies residues 299 to 672 (SDELDAWTDF…QASSQSWVPG (374 aa)). S310 carries the post-translational modification Phosphoserine. At S314 the chain carries Phosphoserine; by SGK1. Residues S398 and S412 each carry the phosphoserine; by AMPK modification. 2 disordered regions span residues 399-441 (QPSP…SLNS) and 535-583 (HQHQ…QTLS). Polar residues-rich tracts occupy residues 409 to 441 (RGSS…SLNS) and 548 to 577 (ALSN…PASQ). K418 is subject to N6-methyllysine. S420 carries the phosphoserine modification. Phosphoserine; by MAPKAPK5 is present on S550. Residue S554 is modified to Phosphoserine; by AMPK and MAPKAPK5. Phosphoserine; by AMPK occurs at positions 587 and 625. S643 carries the phosphoserine; by IKKB modification.

In terms of assembly, upon metabolic stress, forms a complex composed of FOXO3, SIRT3 and mitochondrial RNA polymerase POLRMT; the complex is recruited to mtDNA in a SIRT3-dependent manner. Also forms a complex composed of FOXO3, SIRT3, TFAM and POLRMT. Interacts with SIRT2; the interaction occurs independently of SIRT2 deacetylase activity. Interacts with YWHAB/14-3-3-beta and YWHAZ/14-3-3-zeta, which are required for cytosolic sequestration. Upon oxidative stress, interacts with STK4/MST1, which disrupts interaction with YWHAB/14-3-3-beta and leads to nuclear translocation. Interacts with PIM1. Interacts with DDIT3/CHOP. Interacts (deacetylated form) with SKP2. Interacts with CHUK and IKBKB. Interacts with CAMK2A, CAMK2B and calcineurin A. Interacts with NUPR1; this interaction represses FOXO3 transactivation. Deacetylation by SIRT1 or SIRT2 stimulates interaction of FOXO3 with SKP2 and facilitates SCF(SKP2)-mediated FOXO3 ubiquitination and proteasomal degradation. Deacetylation by SIRT2 stimulates FOXO3-mediated transcriptional activity in response to oxidative stress. Deacetylated by SIRT3. Deacetylation by SIRT3 stimulates FOXO3-mediated mtDNA transcriptional activity in response to metabolic stress. Post-translationally, in the presence of survival factors such as IGF1, phosphorylated on Thr-32 and Ser-252 by AKT1/PKB. This phosphorylated form then interacts with 14-3-3 proteins and is retained in the cytoplasm. Survival factor withdrawal induces dephosphorylation and promotes translocation to the nucleus where the dephosphorylated protein induces transcription of target genes and triggers apoptosis. Although AKT1/PKB doesn't appear to phosphorylate Ser-314 directly, it may activate other kinases that trigger phosphorylation at this residue. Phosphorylated by STK4/MST1 on Ser-208 upon oxidative stress, which leads to dissociation from YWHAB/14-3-3-beta and nuclear translocation. Phosphorylated by PIM1. Phosphorylation by AMPK leads to the activation of transcriptional activity without affecting subcellular localization. Phosphorylated by AMPK on Ser-30 in response to metabolic stress which mediates FOXO3 mitochondrial translocation. Phosphorylation by MAPKAPK5 promotes nuclear localization and DNA-binding, leading to induction of miR-34b and miR-34c expression, 2 post-transcriptional regulators of MYC that bind to the 3'UTR of MYC transcript and prevent its translation. Phosphorylated by CHUK/IKKA and IKBKB/IKKB. TNF-induced inactivation of FOXO3 requires its phosphorylation at Ser-643 by IKBKB/IKKB which promotes FOXO3 retention in the cytoplasm, polyubiquitination and ubiquitin-mediated proteasomal degradation. May be dephosphorylated by calcineurin A on Ser-298 which abolishes FOXO3 transcriptional activity. Phosphorylation at Ser-252 promotes its degradation by the proteasome. Dephosphorylation at Ser-252 by protein phosphatase 2A (PPP2CA) promotes its stabilization; interaction with PPP2CA is enhanced by AMBRA1. In terms of processing, heavily methylated by SET9 which decreases stability, while moderately increasing transcriptional activity. The main methylation site is Lys-270. Methylation doesn't affect subcellular location. Polyubiquitinated. Ubiquitinated by a SCF complex containing SKP2, leading to proteasomal degradation. Post-translationally, the N-terminus is cleaved following import into the mitochondrion. Expressed in white and brown adipose tissues (at protein level). Expressed in liver, kidney, lung and colon (at protein level). Expressed in skeletal muscles (at protein level).

It localises to the cytoplasm. The protein resides in the cytosol. It is found in the nucleus. The protein localises to the mitochondrion matrix. Its subcellular location is the mitochondrion outer membrane. Functionally, transcriptional activator that recognizes and binds to the DNA sequence 5'-[AG]TAAA[TC]A-3' and regulates different processes, such as apoptosis and autophagy. Acts as a positive regulator of autophagy in skeletal muscle: in starved cells, enters the nucleus following dephosphorylation and binds the promoters of autophagy genes, such as GABARAP1L, MAP1LC3B and ATG12, thereby activating their expression, resulting in proteolysis of skeletal muscle proteins. Triggers apoptosis in the absence of survival factors, including neuronal cell death upon oxidative stress. Participates in post-transcriptional regulation of MYC: following phosphorylation by MAPKAPK5, promotes induction of miR-34b and miR-34c expression, 2 post-transcriptional regulators of MYC that bind to the 3'UTR of MYC transcript and prevent its translation. In response to metabolic stress, translocates into the mitochondria where it promotes mtDNA transcription. Also acts as a key regulator of chondrogenic commitment of skeletal progenitor cells in response to lipid availability: when lipids levels are low, translocates to the nucleus and promotes expression of SOX9, which induces chondrogenic commitment and suppresses fatty acid oxidation. Also acts as a key regulator of regulatory T-cells (Treg) differentiation by activating expression of FOXP3. The chain is Forkhead box protein O3 from Mus musculus (Mouse).